A 295-amino-acid polypeptide reads, in one-letter code: MSVILGSDLVKRGMAQMQKGGVIMDVVNAEQARIAEAAGAVAVMALERVPSDIRAAGGVARMANPRIVKEVMEAVSIPVMAKARIGHITEARVLEAMGVDYIDESEVLTPADEEFHLLKSEYTVPFVCGCRDLGEALRRIGEGASMLRTKGEPGTGNIVEAVRHMRKVNSQVRKVVNMSTDELMTEAKILGAPFELLLQIKQLGKLPVVNFAAGGVATPADAALMMELGADGVFVGSGIFKAENPEKFARAIVQATTHYQDYDLIARLSEELGEPMRGLEISKLSVQDRMQERGW.

Asp25 contributes to the D-ribose 5-phosphate binding site. Lys82 acts as the Schiff-base intermediate with D-ribose 5-phosphate in catalysis. Residue Gly154 participates in D-ribose 5-phosphate binding. D-glyceraldehyde 3-phosphate is bound at residue Arg166. Residues Gly215 and Gly236–Ser237 each bind D-ribose 5-phosphate.

This sequence belongs to the PdxS/SNZ family. In the presence of PdxT, forms a dodecamer of heterodimers.

The catalysed reaction is aldehydo-D-ribose 5-phosphate + D-glyceraldehyde 3-phosphate + L-glutamine = pyridoxal 5'-phosphate + L-glutamate + phosphate + 3 H2O + H(+). It functions in the pathway cofactor biosynthesis; pyridoxal 5'-phosphate biosynthesis. Functionally, catalyzes the formation of pyridoxal 5'-phosphate from ribose 5-phosphate (RBP), glyceraldehyde 3-phosphate (G3P) and ammonia. The ammonia is provided by the PdxT subunit. Can also use ribulose 5-phosphate and dihydroxyacetone phosphate as substrates, resulting from enzyme-catalyzed isomerization of RBP and G3P, respectively. This is Pyridoxal 5'-phosphate synthase subunit PdxS from Haemophilus ducreyi (strain 35000HP / ATCC 700724).